The following is a 508-amino-acid chain: MPPKRNEKYKLPIPFPEGKVLDDMEGNQWVLGKKIGSGGFGLIYLAFPTNKPEKDARHVVKVEYQENGPLFSELKFYQRVAKKDCIKKWIERKQLDYLGIPLFYGSGLTEFKGRSYRFMVMERLGIDLQKISGQNGTFKKSTVLQLGIRMLDVLEYIHENEYVHGDIKAANLLLGYKNPDQVYLADYGLSYRYCPNGNHKQYQENPRKGHNGTIEFTSLDAHKGVALSRRSDVEILGYCMLRWLCGKLPWEQNLKDPVAVQTAKTNLLDELPQSVLKWAPSGSSCCEIAQFLVCAHSLAYDEKPNYQALKKILNPHGIPLGPLDFSTKGQSINVHTPNSQKVDSQKAATKQVNKAHNRLIEKKVHSERSAESCATWKVQKEEKLIGLMNNEAAQESTRRRQKYQESQEPLNEVNSFPQKISYTQFPNSFYEPHQDFTSPDIFKKSRSPSWYKYTSTVSTGITDLESSTGLWPTISQFTLSEETNADVYYYRIIIPVLLMLVFLALFFL.

A Protein kinase domain is found at 29–319 (WVLGKKIGSG…KKILNPHGIP (291 aa)). ATP contacts are provided by residues 35–43 (IGSGGFGLI) and Lys-61. The Proton acceptor role is filled by Asp-166. Thr-336 is subject to Phosphothreonine. The tract at residues 397–508 (TRRRQKYQES…MLVFLALFFL (112 aa)) is interaction with MAP3K7. Ser-406 is modified (phosphoserine). The chain crosses the membrane as a helical; Anchor for type IV membrane protein span at residues 487 to 507 (VYYYRIIIPVLLMLVFLALFF).

This sequence belongs to the protein kinase superfamily. CK1 Ser/Thr protein kinase family. VRK subfamily. As to quaternary structure, isoform 1 interacts with MAP3K7, MAP2K7, MAP2K1 and KSR1. Isoform 1 and isoform 2 interact with RAN and MAPK8IP1. (Microbial infection) Isoform 1 interacts with Epstein-Barr virus BHRF1; this interaction is involved in protecting cells from apoptosis. In terms of assembly, (Microbial infection) Isoform 1 interacts with vaccinia protein B12. Autophosphorylated. As to expression, isoform 1 and isoform 2 are expressed in various tumor cell lines. Expression of isoform 1 inversely correlates with ERBB2 in breast carcinomas (at protein level). Widely expressed. Highly expressed in fetal liver, skeletal muscle, pancreas, heart, peripheral blood leukocytes and testis.

The protein resides in the cytoplasm. The protein localises to the endoplasmic reticulum membrane. It localises to the mitochondrion membrane. Its subcellular location is the nucleus envelope. It is found in the nucleus. It carries out the reaction L-seryl-[protein] + ATP = O-phospho-L-seryl-[protein] + ADP + H(+). The enzyme catalyses L-threonyl-[protein] + ATP = O-phospho-L-threonyl-[protein] + ADP + H(+). Its activity is regulated as follows. RAN inhibits its autophosphorylation and its ability to phosphorylate histone H3. Its function is as follows. Serine/threonine kinase that regulates several signal transduction pathways. Isoform 1 modulates the stress response to hypoxia and cytokines, such as interleukin-1 beta (IL1B) and this is dependent on its interaction with MAPK8IP1, which assembles mitogen-activated protein kinase (MAPK) complexes. Inhibition of signal transmission mediated by the assembly of MAPK8IP1-MAPK complexes reduces JNK phosphorylation and JUN-dependent transcription. Phosphorylates 'Thr-18' of p53/TP53, histone H3, and may also phosphorylate MAPK8IP1. Phosphorylates BANF1 and disrupts its ability to bind DNA and reduces its binding to LEM domain-containing proteins. Down-regulates the transactivation of transcription induced by ERBB2, HRAS, BRAF, and MEK1. Blocks the phosphorylation of ERK in response to ERBB2 and HRAS. Can also phosphorylate the following substrates that are commonly used to establish in vitro kinase activity: casein, MBP and histone H2B, but it is not sure that this is physiologically relevant. Phosphorylates 'Thr-18' of p53/TP53, as well as histone H3. Reduces p53/TP53 ubiquitination by MDM2, promotes p53/TP53 acetylation by EP300 and thereby increases p53/TP53 stability and activity. The chain is Serine/threonine-protein kinase VRK2 (VRK2) from Homo sapiens (Human).